The sequence spans 67 residues: DNA-directed RNA polymerase subunit omega (67 aa).

It belongs to the RNA polymerase subunit omega family. As to quaternary structure, the RNAP catalytic core consists of 2 alpha, 1 beta, 1 beta' and 1 omega subunit. When a sigma factor is associated with the core the holoenzyme is formed, which can initiate transcription.

It catalyses the reaction RNA(n) + a ribonucleoside 5'-triphosphate = RNA(n+1) + diphosphate. Promotes RNA polymerase assembly. Latches the N- and C-terminal regions of the beta' subunit thereby facilitating its interaction with the beta and alpha subunits. The chain is DNA-directed RNA polymerase subunit omega from Bacillus velezensis (strain DSM 23117 / BGSC 10A6 / LMG 26770 / FZB42) (Bacillus amyloliquefaciens subsp. plantarum).